A 735-amino-acid chain; its full sequence is Transcription initiation factor IIF subunit alpha (735 aa).

Disordered stretches follow at residues Met1 to Glu68, Glu165 to Leu263, Asn297 to Gly323, Lys446 to Val465, Glu471 to Pro606, and Pro631 to Pro674. Residues Arg33–Ser54 are compositionally biased toward low complexity. Composition is skewed to basic and acidic residues over residues Val59 to Glu68 and Glu165 to Arg174. Residues Ser175–Ile219 are compositionally biased toward polar residues. Ser198 bears the Phosphoserine mark. Thr200 bears the Phosphothreonine mark. The segment covering Pro220–Val238 has biased composition (low complexity). The span at Glu239–Leu263 shows a compositional bias: polar residues. 2 stretches are compositionally biased toward acidic residues: residues Ala453 to Val465 and Glu471 to Pro480. The span at Gln487–Met500 shows a compositional bias: basic and acidic residues. Over residues Ala513–Leu522 the composition is skewed to acidic residues. Ser515 carries the post-translational modification Phosphoserine. Positions Phe523–Lys536 are enriched in basic and acidic residues. Phosphoserine occurs at positions 560, 562, and 571. Over residues Ile564–Ser583 the composition is skewed to basic and acidic residues. The span at Lys584 to Lys595 shows a compositional bias: basic residues. Residues Asn636–Pro654 are compositionally biased toward polar residues. Position 655 is a phosphoserine (Ser655).

This sequence belongs to the TFIIF alpha subunit family. TFIIF is composed of three different subunits: TFG1/RAP74, TFG2/RAP30 and TAF14. Phosphorylated on Ser and other residues by TAF1 and casein kinase II-like kinases.

It localises to the nucleus. Functionally, TFIIF is a general transcription initiation factor that binds to RNA polymerase II. Its functions include the recruitment of RNA polymerase II to the promoter bound DNA-TBP-TFIIB complex, decreasing the affinity of RNA polymerase II for non-specific DNA, allowing for the subsequent recruitment of TFIIE and TFIIH, and facilitating RNA polymerase II elongation. The chain is Transcription initiation factor IIF subunit alpha (TFG1) from Saccharomyces cerevisiae (strain ATCC 204508 / S288c) (Baker's yeast).